A 585-amino-acid polypeptide reads, in one-letter code: tRNA 5-methylaminomethyl-2-thiouridine biosynthesis bifunctional protein MnmC (585 aa).

Residues 1–236 form a tRNA (mnm(5)s(2)U34)-methyltransferase region; it reads MTPDGLYCDP…KRERLEAVWP (236 aa). An FAD-dependent cmnm(5)s(2)U34 oxidoreductase region spans residues 254–585; sequence LGAGIAGASL…SRRAGQGAAG (332 aa). The disordered stretch occupies residues 564–585; it reads EAMAPGRFAERRSRRAGQGAAG.

In the N-terminal section; belongs to the methyltransferase superfamily. tRNA (mnm(5)s(2)U34)-methyltransferase family. The protein in the C-terminal section; belongs to the DAO family. The cofactor is FAD.

The protein resides in the cytoplasm. The enzyme catalyses 5-aminomethyl-2-thiouridine(34) in tRNA + S-adenosyl-L-methionine = 5-methylaminomethyl-2-thiouridine(34) in tRNA + S-adenosyl-L-homocysteine + H(+). Functionally, catalyzes the last two steps in the biosynthesis of 5-methylaminomethyl-2-thiouridine (mnm(5)s(2)U) at the wobble position (U34) in tRNA. Catalyzes the FAD-dependent demodification of cmnm(5)s(2)U34 to nm(5)s(2)U34, followed by the transfer of a methyl group from S-adenosyl-L-methionine to nm(5)s(2)U34, to form mnm(5)s(2)U34. This is tRNA 5-methylaminomethyl-2-thiouridine biosynthesis bifunctional protein MnmC from Maricaulis maris (strain MCS10) (Caulobacter maris).